Here is a 162-residue protein sequence, read N- to C-terminus: Sec-independent protein translocase protein TatB (162 aa).

A helical transmembrane segment spans residues 1 to 21 (MFDIGFLEIIVIMVIALIVIG). Residues 86-162 (IQDEFGIDQE…ESTPESSNKS (77 aa)) are disordered. Over residues 108 to 117 (FSGTQFNKAP) the composition is skewed to polar residues. Low complexity predominate over residues 123–135 (PTTEESPSSTPET). The span at 147–162 (DVSAPSESTPESSNKS) shows a compositional bias: polar residues.

It belongs to the TatB family. In terms of assembly, the Tat system comprises two distinct complexes: a TatABC complex, containing multiple copies of TatA, TatB and TatC subunits, and a separate TatA complex, containing only TatA subunits. Substrates initially bind to the TatABC complex, which probably triggers association of the separate TatA complex to form the active translocon.

Its subcellular location is the cell inner membrane. Functionally, part of the twin-arginine translocation (Tat) system that transports large folded proteins containing a characteristic twin-arginine motif in their signal peptide across membranes. Together with TatC, TatB is part of a receptor directly interacting with Tat signal peptides. TatB may form an oligomeric binding site that transiently accommodates folded Tat precursor proteins before their translocation. The protein is Sec-independent protein translocase protein TatB of Hydrogenovibrio crunogenus (strain DSM 25203 / XCL-2) (Thiomicrospira crunogena).